We begin with the raw amino-acid sequence, 179 residues long: Large ribosomal subunit protein uL5 (179 aa).

It belongs to the universal ribosomal protein uL5 family. Part of the 50S ribosomal subunit; part of the 5S rRNA/L5/L18/L25 subcomplex. Contacts the 5S rRNA and the P site tRNA. Forms a bridge to the 30S subunit in the 70S ribosome.

This is one of the proteins that bind and probably mediate the attachment of the 5S RNA into the large ribosomal subunit, where it forms part of the central protuberance. In the 70S ribosome it contacts protein S13 of the 30S subunit (bridge B1b), connecting the 2 subunits; this bridge is implicated in subunit movement. Contacts the P site tRNA; the 5S rRNA and some of its associated proteins might help stabilize positioning of ribosome-bound tRNAs. This is Large ribosomal subunit protein uL5 from Pseudomonas fluorescens (strain ATCC BAA-477 / NRRL B-23932 / Pf-5).